The primary structure comprises 241 residues: Superantigen-like protein 13 (241 aa).

A signal peptide spans 1–26 (MNNNITKKIILSTTLLLLGTASTQFP).

It belongs to the staphylococcal/streptococcal toxin family. As to quaternary structure, interacts with host FPR2; this interaction promotes neutrophil chemotaxis.

In terms of biological role, acts as a pathogen alarming molecule by acting on host neutrophil chemotactic factors FPR2. Plays a role of chemoattractant and induces degranulation and oxidative burst in neutrophils. The chain is Superantigen-like protein 13 from Staphylococcus aureus (strain Newman).